Consider the following 391-residue polypeptide: Multidrug resistance protein MdtL (391 aa).

12 helical membrane passes run 4 to 24, 42 to 62, 69 to 89, 93 to 113, 131 to 151, 158 to 178, 203 to 222, 245 to 265, 269 to 289, 293 to 313, 331 to 351, and 356 to 376; these read FLIC…MYLV, IAFS…GKVA, PVAI…SLAE, LFLA…VVAF, LLNG…HLIM, SLFW…LFIL, FFLS…LTFV, ALTA…LGIF, TLMI…AVSP, VSLF…GVAM, LGIA…VVGI, and MLIG…MFVA.

This sequence belongs to the major facilitator superfamily. DHA1 family. MdtL (TC 2.A.1.2.22) subfamily.

The protein localises to the cell inner membrane. Functionally, confers resistance to chloramphenicol. In Escherichia coli O17:K52:H18 (strain UMN026 / ExPEC), this protein is Multidrug resistance protein MdtL.